Reading from the N-terminus, the 300-residue chain is Putative 1-phosphofructokinase (300 aa).

Residues 214–219 (SDGAQG) and 246–247 (GD) each bind ATP. Catalysis depends on Asp247, which acts as the Proton acceptor.

This sequence belongs to the carbohydrate kinase PfkB family.

The enzyme catalyses beta-D-fructose 1-phosphate + ATP = beta-D-fructose 1,6-bisphosphate + ADP + H(+). Its function is as follows. Catalyzes the ATP-dependent phosphorylation of fructose-l-phosphate to fructose-l,6-bisphosphate. The polypeptide is Putative 1-phosphofructokinase (fruK) (Mycoplasma pneumoniae (strain ATCC 29342 / M129 / Subtype 1) (Mycoplasmoides pneumoniae)).